The chain runs to 878 residues: MKHLTSAEVRQMFLDFFKEKGHAVEPSASLVPHEDPSLLWINSGVATLKKYFDGRVVPENPRIVNAQKAIRTNDIENVGKTARHHTFFEMLGNFSIGDYFKEEAITWAWEFLTSDKWIGFDKELLSVTVHPEDEEAYEFWAKKIGIPEERIIRLEGNFWDIGEGPSGPNTEIFYDRGEAYGNDPEDPELYPGGENDRYLEVWNLVFSEFNHNPDGTYTPLPKKNIDTGMGLERMVSVIQNVPTNFDTDLFVPIIKATESISGETYGKDNVKDTAFKVIADHIRTVAFAVSDGALPSNEGRGYVLRRLLRRAVRYAKTINIHRPFMFDLVPVVAEIMADFYPEVKEKADFIAKVIKTEEERFHETLNEGLAILSEMIKKEKDKGSSVISGADVFKLYDTYGFPVELTEEYAEDENMTVDHEGFEEEMNQQRERARNARQDVGSMQVQGGALRDVTVESTFVGYSQTKADANIIVLLQDGQLIEEAHEGESVQIILDETPFYAESGGQIGDKGYLRSEQAVVRIKDVQKAPNGQHVHEGVVESGTVQKGLHVTAEVEDHMRSGVIKNHTATHLLHQALKDVLGTHVNQAGSLVTENRLRFDFSHFGQVTKEELEQIERIVNEKIWASIPVSIDLKPIAEAKEMGAMALFGEKYGDIVRVVQVGDYSLELCGGCHVRNTAEIGLFKIVSESGIGAGTRRIEAVTGQGAYVEMNSQISVLKQTADELKTNIKEVPKRVAALQAELKDAQRENESLLAKLGNVEAGAILSKVKEVDGVNVLAAKVNAKDMNHLRTMVDELKAKLGSAVIVLGAVQNDKVNISAGVTKDLIEKGLHAGKLVKQAAEVCGGGGGGRPDMAQAGGKQPEKLEEALASVEDWVKSVL.

Positions 566, 570, 668, and 672 each coordinate Zn(2+).

This sequence belongs to the class-II aminoacyl-tRNA synthetase family. Zn(2+) serves as cofactor.

The protein localises to the cytoplasm. It carries out the reaction tRNA(Ala) + L-alanine + ATP = L-alanyl-tRNA(Ala) + AMP + diphosphate. Functionally, catalyzes the attachment of alanine to tRNA(Ala) in a two-step reaction: alanine is first activated by ATP to form Ala-AMP and then transferred to the acceptor end of tRNA(Ala). Also edits incorrectly charged Ser-tRNA(Ala) and Gly-tRNA(Ala) via its editing domain. This Bacillus subtilis (strain 168) protein is Alanine--tRNA ligase.